Reading from the N-terminus, the 37-residue chain is Cytochrome b6-f complex subunit 5 (37 aa).

The helical transmembrane segment at 5 to 25 threads the bilayer; the sequence is LLSGIVLGLIPITLAGLFVTA.

Belongs to the PetG family. The 4 large subunits of the cytochrome b6-f complex are cytochrome b6, subunit IV (17 kDa polypeptide, PetD), cytochrome f and the Rieske protein, while the 4 small subunits are PetG, PetL, PetM and PetN. The complex functions as a dimer.

It localises to the plastid. The protein localises to the chloroplast thylakoid membrane. In terms of biological role, component of the cytochrome b6-f complex, which mediates electron transfer between photosystem II (PSII) and photosystem I (PSI), cyclic electron flow around PSI, and state transitions. PetG is required for either the stability or assembly of the cytochrome b6-f complex. The polypeptide is Cytochrome b6-f complex subunit 5 (Chaetosphaeridium globosum (Charophycean green alga)).